Here is a 155-residue protein sequence, read N- to C-terminus: Small ribosomal subunit protein uS13 (155 aa).

Basic residues predominate over residues glutamine 135–arginine 145. A disordered region spans residues glutamine 135–alanine 155. Over residues threonine 146–alanine 155 the composition is skewed to low complexity.

Belongs to the universal ribosomal protein uS13 family. Component of the small ribosomal subunit.

It is found in the cytoplasm. Its function is as follows. Component of the small ribosomal subunit. The ribosome is a large ribonucleoprotein complex responsible for the synthesis of proteins in the cell. The sequence is that of Small ribosomal subunit protein uS13 (RPS18) from Entamoeba histolytica (strain ATCC 30459 / HM-1:IMSS / ABRM).